The sequence spans 177 residues: Peptide methionine sulfoxide reductase MsrA (177 aa).

Cys-12 is a catalytic residue.

It belongs to the MsrA Met sulfoxide reductase family.

The enzyme catalyses L-methionyl-[protein] + [thioredoxin]-disulfide + H2O = L-methionyl-(S)-S-oxide-[protein] + [thioredoxin]-dithiol. It carries out the reaction [thioredoxin]-disulfide + L-methionine + H2O = L-methionine (S)-S-oxide + [thioredoxin]-dithiol. Has an important function as a repair enzyme for proteins that have been inactivated by oxidation. Catalyzes the reversible oxidation-reduction of methionine sulfoxide in proteins to methionine. In Halobacterium salinarum (strain ATCC 29341 / DSM 671 / R1), this protein is Peptide methionine sulfoxide reductase MsrA.